The primary structure comprises 253 residues: tRNA pseudouridine synthase A (253 aa).

Residue D53 is the Nucleophile of the active site. Y112 is a substrate binding site.

This sequence belongs to the tRNA pseudouridine synthase TruA family. As to quaternary structure, homodimer.

The enzyme catalyses uridine(38/39/40) in tRNA = pseudouridine(38/39/40) in tRNA. Its function is as follows. Formation of pseudouridine at positions 38, 39 and 40 in the anticodon stem and loop of transfer RNAs. This chain is tRNA pseudouridine synthase A, found in Lactococcus lactis subsp. cremoris (strain MG1363).